The chain runs to 213 residues: Cytidylate kinase (213 aa).

Position 9–17 (9–17 (GPAASGKGT)) interacts with ATP.

This sequence belongs to the cytidylate kinase family. Type 1 subfamily.

The protein localises to the cytoplasm. It catalyses the reaction CMP + ATP = CDP + ADP. It carries out the reaction dCMP + ATP = dCDP + ADP. This chain is Cytidylate kinase, found in Caulobacter vibrioides (strain ATCC 19089 / CIP 103742 / CB 15) (Caulobacter crescentus).